The following is a 252-amino-acid chain: 2-succinyl-6-hydroxy-2,4-cyclohexadiene-1-carboxylate synthase (252 aa).

Belongs to the AB hydrolase superfamily. MenH family. Monomer.

It carries out the reaction 5-enolpyruvoyl-6-hydroxy-2-succinyl-cyclohex-3-ene-1-carboxylate = (1R,6R)-6-hydroxy-2-succinyl-cyclohexa-2,4-diene-1-carboxylate + pyruvate. Its pathway is quinol/quinone metabolism; 1,4-dihydroxy-2-naphthoate biosynthesis; 1,4-dihydroxy-2-naphthoate from chorismate: step 3/7. The protein operates within quinol/quinone metabolism; menaquinone biosynthesis. Catalyzes a proton abstraction reaction that results in 2,5-elimination of pyruvate from 2-succinyl-5-enolpyruvyl-6-hydroxy-3-cyclohexene-1-carboxylate (SEPHCHC) and the formation of 2-succinyl-6-hydroxy-2,4-cyclohexadiene-1-carboxylate (SHCHC). This Shigella dysenteriae serotype 1 (strain Sd197) protein is 2-succinyl-6-hydroxy-2,4-cyclohexadiene-1-carboxylate synthase.